Reading from the N-terminus, the 329-residue chain is Helicase VP6-A (329 aa).

2 disordered regions span residues 28 to 130 (NLVD…TNGG) and 189 to 232 (DLRR…SEEP). Basic and acidic residues-rich tracts occupy residues 36–58 (EGGK…KDGE), 65–83 (GQKE…DRRI), and 96–109 (SGER…RGDG). Lys-110 serves as a coordination point for ATP. The span at 110–129 (KVGGGGGDADAGVGATGTNG) shows a compositional bias: gly residues. Composition is skewed to basic and acidic residues over residues 189 to 207 (DLRR…ERGG) and 215 to 232 (HGDA…SEEP).

It belongs to the reoviruses VP6 family. As to quaternary structure, homohexamer.

The protein localises to the virion. The catalysed reaction is ATP + H2O = ADP + phosphate + H(+). Functionally, ATP dependent RNA helicase essential for RNA packaging and viral transcription. Possesses ss- and dsRNA-binding capacity. In Bluetongue virus 10 (isolate USA) (BTV 10), this protein is Helicase VP6-A (Segment-9).